Consider the following 133-residue polypeptide: uncharacterized protein (133 aa).

This is an uncharacterized protein from Saccharomyces cerevisiae (strain ATCC 204508 / S288c) (Baker's yeast).